Reading from the N-terminus, the 268-residue chain is Probable membrane transporter protein HI_0806 (268 aa).

Helical transmembrane passes span 6-26, 46-66, 79-99, 101-121, 147-167, 178-198, 212-232, and 248-268; these read IFIL…FGIG, VISA…LLFF, ILWS…SFYF, TAII…KTFL, GGGL…APLV, IAVY…YGYL, LGLN…MSFF, and LLAI…FVFH.

It belongs to the 4-toluene sulfonate uptake permease (TSUP) (TC 2.A.102) family.

The protein resides in the cell membrane. The chain is Probable membrane transporter protein HI_0806 from Haemophilus influenzae (strain ATCC 51907 / DSM 11121 / KW20 / Rd).